The primary structure comprises 1229 residues: Alpha,alpha-trehalose-phosphate synthase [UDP-forming] 2 (1229 aa).

Residues 196-233 (VSSDSEGEEAIHNVRSGTHTESESEEDPKAPRSGLATS) form a disordered region. Basic and acidic residues predominate over residues 213-225 (THTESESEEDPKA).

In the N-terminal section; belongs to the glycosyltransferase 20 family. This sequence in the C-terminal section; belongs to the gob-1 trehalose phosphatase family.

The catalysed reaction is D-glucose 6-phosphate + UDP-alpha-D-glucose = alpha,alpha-trehalose 6-phosphate + UDP + H(+). In terms of biological role, catalyzes the production of trehalose from glucose-6-phosphate and UDP-alpha-D-glucose in a 2 step process. The sequence is that of Alpha,alpha-trehalose-phosphate synthase [UDP-forming] 2 (tps-2) from Caenorhabditis elegans.